A 158-amino-acid chain; its full sequence is 6,7-dimethyl-8-ribityllumazine synthase (158 aa).

5-amino-6-(D-ribitylamino)uracil is bound by residues Phe18, Ser50–Asp52, and Ala74–Ile76. Glu79 to Thr80 is a (2S)-2-hydroxy-3-oxobutyl phosphate binding site. His82 acts as the Proton donor in catalysis. Leu107 is a binding site for 5-amino-6-(D-ribitylamino)uracil. Arg122 is a (2S)-2-hydroxy-3-oxobutyl phosphate binding site.

It belongs to the DMRL synthase family.

The catalysed reaction is (2S)-2-hydroxy-3-oxobutyl phosphate + 5-amino-6-(D-ribitylamino)uracil = 6,7-dimethyl-8-(1-D-ribityl)lumazine + phosphate + 2 H2O + H(+). It participates in cofactor biosynthesis; riboflavin biosynthesis; riboflavin from 2-hydroxy-3-oxobutyl phosphate and 5-amino-6-(D-ribitylamino)uracil: step 1/2. Functionally, catalyzes the formation of 6,7-dimethyl-8-ribityllumazine by condensation of 5-amino-6-(D-ribitylamino)uracil with 3,4-dihydroxy-2-butanone 4-phosphate. This is the penultimate step in the biosynthesis of riboflavin. This is 6,7-dimethyl-8-ribityllumazine synthase from Sulfolobus acidocaldarius (strain ATCC 33909 / DSM 639 / JCM 8929 / NBRC 15157 / NCIMB 11770).